A 190-amino-acid chain; its full sequence is MNNNLPTGSIAAAVDLLNKENVIAYPTEAVFGVGCDPDSETAVTRLLELKQRPVDKGLILIAASFEQLKPYIDDSILTTAQRKAVFDCWPGPVTFVFPASATTPRWLTGRFDSLAVRVTDHPLVVALCNAYGKPLVSTSANLSGLPPCRTVEEVRAQFGDDFPMVEGATGGRLNPSEIRDALTGELFRQG.

Positions 7–190 constitute a YrdC-like domain; that stretch reads TGSIAAAVDL…ALTGELFRQG (184 aa).

This sequence belongs to the SUA5 family. TsaC subfamily.

The protein localises to the cytoplasm. It catalyses the reaction L-threonine + hydrogencarbonate + ATP = L-threonylcarbamoyladenylate + diphosphate + H2O. In terms of biological role, required for the formation of a threonylcarbamoyl group on adenosine at position 37 (t(6)A37) in tRNAs that read codons beginning with adenine. Catalyzes the conversion of L-threonine, HCO(3)(-)/CO(2) and ATP to give threonylcarbamoyl-AMP (TC-AMP) as the acyladenylate intermediate, with the release of diphosphate. The sequence is that of Threonylcarbamoyl-AMP synthase from Salmonella arizonae (strain ATCC BAA-731 / CDC346-86 / RSK2980).